The primary structure comprises 355 residues: UDP-3-O-acylglucosamine N-acyltransferase (355 aa).

His-248 (proton acceptor) is an active-site residue.

It belongs to the transferase hexapeptide repeat family. LpxD subfamily. Homotrimer.

It catalyses the reaction a UDP-3-O-[(3R)-3-hydroxyacyl]-alpha-D-glucosamine + a (3R)-hydroxyacyl-[ACP] = a UDP-2-N,3-O-bis[(3R)-3-hydroxyacyl]-alpha-D-glucosamine + holo-[ACP] + H(+). Its pathway is bacterial outer membrane biogenesis; LPS lipid A biosynthesis. In terms of biological role, catalyzes the N-acylation of UDP-3-O-acylglucosamine using 3-hydroxyacyl-ACP as the acyl donor. Is involved in the biosynthesis of lipid A, a phosphorylated glycolipid that anchors the lipopolysaccharide to the outer membrane of the cell. This Synechococcus elongatus (strain ATCC 33912 / PCC 7942 / FACHB-805) (Anacystis nidulans R2) protein is UDP-3-O-acylglucosamine N-acyltransferase.